Reading from the N-terminus, the 324-residue chain is Phospho-N-acetylmuramoyl-pentapeptide-transferase (324 aa).

10 helical membrane passes run 5 to 25 (VILF…PILI), 50 to 70 (GTPT…TIVM), 77 to 97 (ISPE…LGFL), 117 to 137 (LIGQ…YNFA), 147 to 167 (LSFD…VGGS), 176 to 196 (LDGL…ILAW), 203 to 223 (VAIF…FNAH), 227 to 247 (VFMG…IAIL), 250 to 270 (LEIL…SVIL), and 302 to 322 (VVVT…YIEV).

Belongs to the glycosyltransferase 4 family. MraY subfamily. Requires Mg(2+) as cofactor.

The protein localises to the cell membrane. The enzyme catalyses UDP-N-acetyl-alpha-D-muramoyl-L-alanyl-gamma-D-glutamyl-meso-2,6-diaminopimeloyl-D-alanyl-D-alanine + di-trans,octa-cis-undecaprenyl phosphate = di-trans,octa-cis-undecaprenyl diphospho-N-acetyl-alpha-D-muramoyl-L-alanyl-D-glutamyl-meso-2,6-diaminopimeloyl-D-alanyl-D-alanine + UMP. It participates in cell wall biogenesis; peptidoglycan biosynthesis. Catalyzes the initial step of the lipid cycle reactions in the biosynthesis of the cell wall peptidoglycan: transfers peptidoglycan precursor phospho-MurNAc-pentapeptide from UDP-MurNAc-pentapeptide onto the lipid carrier undecaprenyl phosphate, yielding undecaprenyl-pyrophosphoryl-MurNAc-pentapeptide, known as lipid I. In Bacillus subtilis (strain 168), this protein is Phospho-N-acetylmuramoyl-pentapeptide-transferase.